The sequence spans 293 residues: Ribosomal protein L11 methyltransferase (293 aa).

Positions 145, 166, 188, and 230 each coordinate S-adenosyl-L-methionine.

Belongs to the methyltransferase superfamily. PrmA family.

The protein localises to the cytoplasm. It catalyses the reaction L-lysyl-[protein] + 3 S-adenosyl-L-methionine = N(6),N(6),N(6)-trimethyl-L-lysyl-[protein] + 3 S-adenosyl-L-homocysteine + 3 H(+). Functionally, methylates ribosomal protein L11. The polypeptide is Ribosomal protein L11 methyltransferase (Salmonella dublin (strain CT_02021853)).